A 1375-amino-acid chain; its full sequence is Patatin-like phospholipase domain-containing protein 6 (1375 aa).

Residues 1–20 (MEAPLQTGMMGTSSHGLATN) are disordered. Over 1-59 (MEAPLQTGMMGTSSHGLATNSSGAKVAERDGFQDVLAPGEGSAGRICGAQPVPFVPQVL) the chain is Lumenal. Over residues 9–20 (MMGTSSHGLATN) the composition is skewed to polar residues. An N-linked (GlcNAc...) asparagine glycan is attached at Asn20. Residues 60–80 (GVMIGAGVAVVVTAVLILLVV) form a helical membrane-spanning segment. The Cytoplasmic portion of the chain corresponds to 81 to 1375 (RRLRVPKTPA…QEPPGSATDA (1295 aa)). Position 195 to 322 (195 to 322 (VLGHFEKPLF…VRVVQIIMVR (128 aa))) interacts with a nucleoside 3',5'-cyclic phosphate. 2 disordered regions span residues 352–436 (FPSP…RSDF) and 449–472 (LQEEASGGSLAAPARTPTQEPREQ). The residue at position 354 (Ser354) is a Phosphoserine. Residues 359–376 (TRTSPVRGSKRMVSTSAT) show a composition bias toward polar residues. Phosphothreonine is present on Thr361. Ser362 and Ser372 each carry phosphoserine. The span at 384–398 (GRPPDPTGAPLPGPT) shows a compositional bias: pro residues. Ser420 carries the phosphoserine modification. Thr464 bears the Phosphothreonine mark. Residues 511 to 633 (ELAK…VAAR) and 629 to 749 (TVAA…LSQK) contribute to the a nucleoside 3',5'-cyclic phosphate site. A PNPLA domain is found at 981 to 1147 (LVLGGGGARG…INNLPADIAR (167 aa)). A GXGXXG motif is present at residues 985–990 (GGGARG). A GXSXG motif is present at residues 1012–1016 (GTSIG). Ser1014 acts as the Nucleophile in catalysis. Asp1134 serves as the catalytic Proton acceptor. The DGA/G motif lies at 1134–1136 (DGG). The segment at 1306–1375 (SYVSDGCADG…QEPPGSATDA (70 aa)) is disordered. Residues 1313 to 1329 (ADGEESDCLTEYEEDAG) are compositionally biased toward acidic residues.

This sequence belongs to the NTE family. Post-translationally, glycosylated. As to expression, expressed in brain, placenta, kidney, neuron and skeletal muscle. Expressed in the developing eye, pituitary and brain.

The protein localises to the endoplasmic reticulum membrane. It catalyses the reaction a 1-acyl-sn-glycero-3-phosphocholine + H2O = sn-glycerol 3-phosphocholine + a fatty acid + H(+). The enzyme catalyses 1-(9Z-octadecenoyl)-sn-glycero-3-phosphocholine + H2O = sn-glycerol 3-phosphocholine + (9Z)-octadecenoate + H(+). It carries out the reaction 1-hexadecanoylglycerol + H2O = glycerol + hexadecanoate + H(+). The catalysed reaction is 2-hexadecanoylglycerol + H2O = glycerol + hexadecanoate + H(+). It catalyses the reaction 1-(9Z-octadecenoyl)-glycerol + H2O = glycerol + (9Z)-octadecenoate + H(+). The enzyme catalyses 2-(9Z-octadecenoyl)-glycerol + H2O = glycerol + (9Z)-octadecenoate + H(+). It carries out the reaction 2-(5Z,8Z,11Z,14Z-eicosatetraenoyl)-glycerol + H2O = glycerol + (5Z,8Z,11Z,14Z)-eicosatetraenoate + H(+). The catalysed reaction is 1-hexadecanoyl-sn-glycero-3-phosphate + H2O = sn-glycerol 3-phosphate + hexadecanoate + H(+). It catalyses the reaction 1-hexadecanoyl-sn-glycero-3-phosphocholine + H2O = sn-glycerol 3-phosphocholine + hexadecanoate + H(+). With respect to regulation, inhibited by a series a OPs such as mipafox (MPX), phenyl saligenin phosphate (PSP), phenyl dipentyl phosphinate (PDPP), diisopropyl fluorophosphate and paraoxon. Its function is as follows. Phospholipase B that deacylates intracellular phosphatidylcholine (PtdCho), generating glycerophosphocholine (GroPtdCho). This deacylation occurs at both sn-2 and sn-1 positions of PtdCho. Catalyzes the hydrolysis of several naturally occurring membrane-associated lipids. Hydrolyzes lysophospholipids and monoacylglycerols, preferring the 1-acyl to the 2-acyl isomer. Does not catalyze hydrolysis of di- or triacylglycerols or fatty acid amides. The polypeptide is Patatin-like phospholipase domain-containing protein 6 (Homo sapiens (Human)).